A 218-amino-acid polypeptide reads, in one-letter code: Nonsense-mediated decay protein 4 (218 aa).

The protein localises to the cytoplasm. Its function is as follows. Involved in nonsense-mediated decay of mRNAs containing premature stop codons. This chain is Nonsense-mediated decay protein 4 (NMD4), found in Saccharomyces cerevisiae (strain ATCC 204508 / S288c) (Baker's yeast).